A 239-amino-acid chain; its full sequence is Orotidine 5'-phosphate decarboxylase (239 aa).

Substrate contacts are provided by residues Asp15, Lys36, 63 to 72 (DLKFHDIPNT), Thr127, Arg189, Gln198, Gly218, and Arg219. Catalysis depends on Lys65, which acts as the Proton donor.

This sequence belongs to the OMP decarboxylase family. Type 1 subfamily. As to quaternary structure, homodimer.

The enzyme catalyses orotidine 5'-phosphate + H(+) = UMP + CO2. It functions in the pathway pyrimidine metabolism; UMP biosynthesis via de novo pathway; UMP from orotate: step 2/2. In terms of biological role, catalyzes the decarboxylation of orotidine 5'-monophosphate (OMP) to uridine 5'-monophosphate (UMP). This is Orotidine 5'-phosphate decarboxylase from Prochlorococcus marinus subsp. pastoris (strain CCMP1986 / NIES-2087 / MED4).